Consider the following 146-residue polypeptide: 3-hydroxyacyl-[acyl-carrier-protein] dehydratase FabZ (146 aa).

H47 is a catalytic residue.

The protein belongs to the thioester dehydratase family. FabZ subfamily.

It is found in the cytoplasm. It catalyses the reaction a (3R)-hydroxyacyl-[ACP] = a (2E)-enoyl-[ACP] + H2O. Functionally, involved in unsaturated fatty acids biosynthesis. Catalyzes the dehydration of short chain beta-hydroxyacyl-ACPs and long chain saturated and unsaturated beta-hydroxyacyl-ACPs. In Nitrosospira multiformis (strain ATCC 25196 / NCIMB 11849 / C 71), this protein is 3-hydroxyacyl-[acyl-carrier-protein] dehydratase FabZ.